A 381-amino-acid chain; its full sequence is Creatine kinase M-type (381 aa).

Positions 11–98 (KLNYKPEEEY…FDPIISDRHG (88 aa)) constitute a Phosphagen kinase N-terminal domain. A Phosphagen kinase C-terminal domain is found at 125–367 (YVLSSRVRTG…KLMVEMEKKL (243 aa)). Position 128-132 (128-132 (SSRVR)) interacts with ATP. Residue Ser-164 is modified to Phosphoserine. Thr-166 is modified (phosphothreonine). Ser-178 is modified (phosphoserine). A Phosphothreonine modification is found at Thr-180. His-191 serves as a coordination point for ATP. Ser-199 carries the phosphoserine modification. Positions 236 and 292 each coordinate ATP. A phosphothreonine mark is found at Thr-313 and Thr-322. ATP-binding positions include 320–325 (RGTGGV) and Asp-335. Ser-372 is subject to Phosphoserine.

It belongs to the ATP:guanido phosphotransferase family. As to quaternary structure, dimer of identical or non-identical chains, which can be either B (brain type) or M (muscle type). With MM being the major form in skeletal muscle and myocardium, MB existing in myocardium, and BB existing in many tissues, especially brain.

Its subcellular location is the cytoplasm. The catalysed reaction is creatine + ATP = N-phosphocreatine + ADP + H(+). Its function is as follows. Reversibly catalyzes the transfer of phosphate between ATP and various phosphogens (e.g. creatine phosphate). Creatine kinase isoenzymes play a central role in energy transduction in tissues with large, fluctuating energy demands, such as skeletal muscle, heart, brain and spermatozoa. This chain is Creatine kinase M-type (CKM), found in Homo sapiens (Human).